The following is a 236-amino-acid chain: 2,3,4,5-tetrahydropyridine-2,6-dicarboxylate N-acetyltransferase (236 aa).

The protein belongs to the transferase hexapeptide repeat family. DapH subfamily.

It carries out the reaction (S)-2,3,4,5-tetrahydrodipicolinate + acetyl-CoA + H2O = L-2-acetamido-6-oxoheptanedioate + CoA. It participates in amino-acid biosynthesis; L-lysine biosynthesis via DAP pathway; LL-2,6-diaminopimelate from (S)-tetrahydrodipicolinate (acetylase route): step 1/3. In terms of biological role, catalyzes the transfer of an acetyl group from acetyl-CoA to tetrahydrodipicolinate. The polypeptide is 2,3,4,5-tetrahydropyridine-2,6-dicarboxylate N-acetyltransferase (Clostridium botulinum (strain Okra / Type B1)).